The sequence spans 113 residues: MHEMAICESLRVSMEEAARAQDFSRVTRVRLAIGAFAGVEVEALRFGFDVVMQGSLAEGAELVVLEEEGTAWCFDCNRTVPLATRLDPCPCCGGERLVPNGGTGMTIKDLEVV.

H2 serves as a coordination point for Ni(2+). 4 residues coordinate Zn(2+): C73, C76, C89, and C92.

Belongs to the HypA/HybF family.

In terms of biological role, involved in the maturation of [NiFe] hydrogenases. Required for nickel insertion into the metal center of the hydrogenase. This chain is Hydrogenase maturation factor HypA, found in Azorhizobium caulinodans (strain ATCC 43989 / DSM 5975 / JCM 20966 / LMG 6465 / NBRC 14845 / NCIMB 13405 / ORS 571).